Consider the following 250-residue polypeptide: 4-hydroxy-tetrahydrodipicolinate reductase (250 aa).

NAD(+) contacts are provided by residues 10 to 15 (GARGRI), 78 to 80 (GTT), and 105 to 108 (APNF). Residue histidine 135 is the Proton donor/acceptor of the active site. Histidine 136 is a binding site for (S)-2,3,4,5-tetrahydrodipicolinate. Lysine 139 acts as the Proton donor in catalysis. Residue 145–146 (GT) participates in (S)-2,3,4,5-tetrahydrodipicolinate binding. The tract at residues 158-177 (RAEAGSAPQPDATTTALDGA) is disordered.

The protein belongs to the DapB family.

Its subcellular location is the cytoplasm. The catalysed reaction is (S)-2,3,4,5-tetrahydrodipicolinate + NAD(+) + H2O = (2S,4S)-4-hydroxy-2,3,4,5-tetrahydrodipicolinate + NADH + H(+). It carries out the reaction (S)-2,3,4,5-tetrahydrodipicolinate + NADP(+) + H2O = (2S,4S)-4-hydroxy-2,3,4,5-tetrahydrodipicolinate + NADPH + H(+). It functions in the pathway amino-acid biosynthesis; L-lysine biosynthesis via DAP pathway; (S)-tetrahydrodipicolinate from L-aspartate: step 4/4. In terms of biological role, catalyzes the conversion of 4-hydroxy-tetrahydrodipicolinate (HTPA) to tetrahydrodipicolinate. This is 4-hydroxy-tetrahydrodipicolinate reductase from Streptomyces griseus subsp. griseus (strain JCM 4626 / CBS 651.72 / NBRC 13350 / KCC S-0626 / ISP 5235).